The following is a 216-amino-acid chain: ATP-dependent Clp protease proteolytic subunit (216 aa).

The active-site Nucleophile is Ser101. The active site involves His126.

This sequence belongs to the peptidase S14 family. As to quaternary structure, component of the chloroplastic Clp protease core complex.

Its subcellular location is the plastid. The protein resides in the chloroplast stroma. It carries out the reaction Hydrolysis of proteins to small peptides in the presence of ATP and magnesium. alpha-casein is the usual test substrate. In the absence of ATP, only oligopeptides shorter than five residues are hydrolyzed (such as succinyl-Leu-Tyr-|-NHMec, and Leu-Tyr-Leu-|-Tyr-Trp, in which cleavage of the -Tyr-|-Leu- and -Tyr-|-Trp bonds also occurs).. Functionally, cleaves peptides in various proteins in a process that requires ATP hydrolysis. Has a chymotrypsin-like activity. Plays a major role in the degradation of misfolded proteins. This chain is ATP-dependent Clp protease proteolytic subunit, found in Saccharum hybrid (Sugarcane).